Here is a 92-residue protein sequence, read N- to C-terminus: Ezrin (92 aa).

One can recognise an FERM domain in the interval 1–72; sequence QLFDQVVKGF…PDFVFYAPRR (72 aa). The residue at position 15 (Lys15) is an N6-acetyllysine. Positions 42–92 are interaction with SCYL3; the sequence is EIRNISFNDKKFVIKPIDKKAPDFVFYAPRRKPDTIEVQQMKLQDFEQKTK.

Interacts with PALS1 and NHERF2. Found in a complex with EZR, PODXL and NHERF2. Interacts with MCC, PLEKHG6, PODXL, SCYL3/PACE1, NHERF1 and TMEM8B. Interacts (when phosphorylated) with FES/FPS. Interacts with dimeric S100P, the interaction may be activating through unmasking of F-actin binding sites. Identified in complexes that contain VIM, EZR, AHNAK, BFSP1, BFSP2, ANK2, PLEC, PRX and spectrin. Detected in a complex composed of at least EZR, AHNAK, PPL and PRX. Interacts with PDPN (via cytoplasmic domain); activates RHOA and promotes epithelial-mesenchymal transition. Interacts with SPN/CD43 cytoplasmic tail, CD44 and ICAM2. Interacts with CLIC5; may work together in a complex which also includes RDX and MYO6 to stabilize linkages between the plasma membrane and subjacent actin cytoskeleton at the base of stereocilia. Post-translationally, phosphorylated by tyrosine-protein kinases. Phosphorylation by ROCK2 suppresses the head-to-tail association of the N-terminal and C-terminal halves resulting in an opened conformation which is capable of actin and membrane-binding. S-nitrosylation is induced by interferon-gamma and oxidatively-modified low-densitity lipoprotein (LDL(ox)) possibly implicating the iNOS-S100A8/9 transnitrosylase complex.

It localises to the apical cell membrane. The protein localises to the cell projection. Its subcellular location is the microvillus membrane. It is found in the ruffle membrane. The protein resides in the cytoplasm. It localises to the cell cortex. The protein localises to the cytoskeleton. Its subcellular location is the microvillus. A head-to-tail association, of the N-terminal and C-terminal halves results in a closed conformation (inactive form) which is incapable of actin or membrane-binding. Functionally, probably involved in connections of major cytoskeletal structures to the plasma membrane. In epithelial cells, required for the formation of microvilli and membrane ruffles on the apical pole. Along with PLEKHG6, required for normal macropinocytosis. In Mesocricetus auratus (Golden hamster), this protein is Ezrin.